The following is a 288-amino-acid chain: MSYQPQTEAATSRFLNVEEAGKTLRIHFNDCGQGDETVVLLHGSGPGATGWANFSRNIDPLVKAGYRVILLDCPGWGKSDSIVNSGSRSDLNARILKSVVDQLDIAKIHLLGNSMGGHSSVAFTLNWPERVGKLVLMGGGTGGMSLFTPMPTEGIKRLNQLYRQPTIENLKLMMDIFVFDTSDLTDALFEARLNNMLSRRDHLENFVKSLEANPKQFPDFGPRLAEIKAQTLIVWGRNDRFVPMDAGLRLLSGIAGSELHIFRDCGHWAQWEHADAFNQLVLNFLARA.

Histidine 267 (proton acceptor) is an active-site residue.

The protein belongs to the AB hydrolase superfamily. MhpC family. In terms of assembly, homodimer.

The enzyme catalyses (2Z,4E)-2-hydroxy-6-oxonona-2,4-dienedioate + H2O = (2Z)-2-hydroxypenta-2,4-dienoate + succinate + H(+). It catalyses the reaction (2Z,4E,7E)-2-hydroxy-6-oxonona-2,4,7-trienedioate + H2O = (2Z)-2-hydroxypenta-2,4-dienoate + fumarate + H(+). The protein operates within aromatic compound metabolism; 3-phenylpropanoate degradation. Its function is as follows. Catalyzes the cleavage of the C5-C6 bond of 2-hydroxy-6-oxononadienedioate and 2-hydroxy-6-oxononatrienedioate, a dienol ring fission product of the bacterial meta-cleavage pathway for degradation of phenylpropionic acid. The polypeptide is 2-hydroxy-6-oxononadienedioate/2-hydroxy-6-oxononatrienedioate hydrolase (Escherichia coli O81 (strain ED1a)).